A 369-amino-acid chain; its full sequence is Peptide chain release factor 2 (369 aa).

Gln249 is modified (N5-methylglutamine).

It belongs to the prokaryotic/mitochondrial release factor family. In terms of processing, methylated by PrmC. Methylation increases the termination efficiency of RF2.

The protein resides in the cytoplasm. In terms of biological role, peptide chain release factor 2 directs the termination of translation in response to the peptide chain termination codons UGA and UAA. The chain is Peptide chain release factor 2 from Thermosipho melanesiensis (strain DSM 12029 / CIP 104789 / BI429).